A 208-amino-acid chain; its full sequence is Ras-related protein Rab-6A (208 aa).

Ser2 carries the N-acetylserine modification. Positions 23, 24, 25, 26, 27, 28, 39, 40, 42, and 45 each coordinate GTP. A Mg(2+)-binding site is contributed by Thr27. Positions 32 to 50 match the Switch 1 motif; that stretch reads RFMYDSFDNTYQATIGIDF. Mg(2+) is bound by residues Thr45 and Asp68. The Switch 2 signature appears at 69 to 88; that stretch reads TAGQERFRSLIPSYIRDSTV. Residue Gly71 participates in GTP binding. An O-AMP-tyrosine; by Legionella DrrA modification is found at Tyr82. The GTP site is built by Asn126, Lys127, Asp129, Ser156, Ala157, and Lys158. Ser184 carries the phosphoserine modification. Residues Cys206 and Cys208 are each lipidated (S-geranylgeranyl cysteine). The residue at position 208 (Cys208) is a Cysteine methyl ester.

The protein belongs to the small GTPase superfamily. Rab family. Interacts (GTP-bound) with DYNLRB1; the interaction is direct. Interacts with BICD1. Interacts with BICD2; the interaction is direct. Interacts (GTP-bound) with VPS13B. In terms of assembly, interacts with BICD1. Interacts (GDP-bound) with DYNLRB1; the interaction is direct. Interacts (GTP-bound) with VPS13B. As to quaternary structure, interacts with BICDL1; leads to its accumulation in the pericentrosomal region. Interacts with SCYL1BP1. Interacts with VSP52. Interacts with RABGAP1. Interacts with GCC2 (via its GRIP domain). Interacts with RAB6IP1 (via its RUN 1 domain). Interacts with TMF1. Interacts with CIMAP3. Interacts (GTP-bound) with APBA1/MINT1 isoform 2, also called Mint1_826, but not with isoform 1. Interacts with RIC1; the interaction is direct with a preference for RAB6A-GDP. Interacts with RGP1; the interaction is direct with a preference for RAB6A-GDP. (Microbial infection) Interacts with human cytomegalovirus protein UL32. The cofactor is Mg(2+). Post-translationally, prenylated. As to expression, ubiquitous.

Its subcellular location is the golgi apparatus membrane. It localises to the cytoplasmic vesicle. The protein localises to the secretory vesicle. It is found in the acrosome membrane. It carries out the reaction GTP + H2O = GDP + phosphate + H(+). Its activity is regulated as follows. Regulated by guanine nucleotide exchange factors (GEFs) which promote the exchange of bound GDP for free GTP. Regulated by GTPase activating proteins (GAPs) which increase the GTP hydrolysis activity. Inhibited by GDP dissociation inhibitors (GDIs). In terms of biological role, the small GTPases Rab are key regulators of intracellular membrane trafficking, from the formation of transport vesicles to their fusion with membranes. Rabs cycle between an inactive GDP-bound form and an active GTP-bound form that is able to recruit to membranes different sets of downstream effectors directly responsible for vesicle formation, movement, tethering and fusion. RAB6A acts as a regulator of COPI-independent retrograde transport from the Golgi apparatus towards the endoplasmic reticulum (ER). Has a low GTPase activity. Recruits VPS13B to the Golgi membrane. Plays a role in neuron projection development. In Homo sapiens (Human), this protein is Ras-related protein Rab-6A.